The sequence spans 92 residues: Probable Fe(2+)-trafficking protein (92 aa).

The protein belongs to the Fe(2+)-trafficking protein family.

Its function is as follows. Could be a mediator in iron transactions between iron acquisition and iron-requiring processes, such as synthesis and/or repair of Fe-S clusters in biosynthetic enzymes. The polypeptide is Probable Fe(2+)-trafficking protein (Shewanella baltica (strain OS223)).